The sequence spans 339 residues: Ribosomal RNA small subunit methyltransferase H (339 aa).

S-adenosyl-L-methionine is bound by residues 40–42 (GGY), Asp-58, Phe-85, Asp-106, and Gln-113.

Belongs to the methyltransferase superfamily. RsmH family.

The protein localises to the cytoplasm. It carries out the reaction cytidine(1402) in 16S rRNA + S-adenosyl-L-methionine = N(4)-methylcytidine(1402) in 16S rRNA + S-adenosyl-L-homocysteine + H(+). Functionally, specifically methylates the N4 position of cytidine in position 1402 (C1402) of 16S rRNA. This chain is Ribosomal RNA small subunit methyltransferase H, found in Parvibaculum lavamentivorans (strain DS-1 / DSM 13023 / NCIMB 13966).